We begin with the raw amino-acid sequence, 530 residues long: Glucose-6-phosphate isomerase (530 aa).

Glu-322 functions as the Proton donor in the catalytic mechanism. Active-site residues include His-351 and Lys-455.

It belongs to the GPI family.

It localises to the cytoplasm. It catalyses the reaction alpha-D-glucose 6-phosphate = beta-D-fructose 6-phosphate. The protein operates within carbohydrate biosynthesis; gluconeogenesis. Its pathway is carbohydrate degradation; glycolysis; D-glyceraldehyde 3-phosphate and glycerone phosphate from D-glucose: step 2/4. Functionally, catalyzes the reversible isomerization of glucose-6-phosphate to fructose-6-phosphate. In Geotalea daltonii (strain DSM 22248 / JCM 15807 / FRC-32) (Geobacter daltonii), this protein is Glucose-6-phosphate isomerase.